Consider the following 354-residue polypeptide: 5,10-methenyltetrahydromethanopterin hydrogenase (354 aa).

This sequence belongs to the HMD family.

The enzyme catalyses 5,10-methenyl-5,6,7,8-tetrahydromethanopterin + H2 = 5,10-methylenetetrahydromethanopterin + H(+). It functions in the pathway one-carbon metabolism; methanogenesis from CO(2); 5,10-methylene-5,6,7,8-tetrahydromethanopterin from 5,10-methenyl-5,6,7,8-tetrahydromethanopterin (hydrogen route): step 1/1. In terms of biological role, catalyzes the reversible reduction of methenyl-H(4)MPT(+) to methylene-H(4)MPT. The protein is 5,10-methenyltetrahydromethanopterin hydrogenase of Methanococcus maripaludis (strain C5 / ATCC BAA-1333).